We begin with the raw amino-acid sequence, 418 residues long: Fumarylacetoacetase (418 aa).

D127 contributes to the Ca(2+) binding site. Catalysis depends on H134, which acts as the Proton acceptor. E200, E202, and D235 together coordinate Ca(2+). D235, K255, and T259 together coordinate Mg(2+).

It belongs to the FAH family. Ca(2+) serves as cofactor. Requires Mg(2+) as cofactor. Highly expressed in the intestine and the hypodermis.

It catalyses the reaction 4-fumarylacetoacetate + H2O = acetoacetate + fumarate + H(+). Its pathway is amino-acid degradation; L-phenylalanine degradation; acetoacetate and fumarate from L-phenylalanine: step 6/6. Fumarylacetoacetase involved in the tyrosine degradation pathway. The sequence is that of Fumarylacetoacetase from Caenorhabditis elegans.